The sequence spans 157 residues: Transcriptional repressor NrdR (157 aa).

A zinc finger lies at 3–34 (CPFCNAEDTKVIDSRLVEEGTQVRRRRECLKC). The ATP-cone domain maps to 49-139 (PRIIKRDGRR…VYRSFQDINA (91 aa)).

The protein belongs to the NrdR family. Zn(2+) serves as cofactor.

Functionally, negatively regulates transcription of bacterial ribonucleotide reductase nrd genes and operons by binding to NrdR-boxes. The sequence is that of Transcriptional repressor NrdR from Coxiella burnetii (strain CbuK_Q154) (Coxiella burnetii (strain Q154)).